Consider the following 379-residue polypeptide: Galactose-1-phosphate uridylyltransferase (379 aa).

The segment covering 1 to 10 (MSHSGADPEQ) has biased composition (basic and acidic residues). A disordered region spans residues 1 to 20 (MSHSGADPEQRQQASEADAM). A Zn(2+)-binding site is contributed by Cys-75. Residues Ala-81, 97 to 98 (ND), and Asn-173 each bind UDP-alpha-D-glucose. His-184 contacts Zn(2+). His-186 functions as the Tele-UMP-histidine intermediate in the catalytic mechanism. Gln-188 lines the UDP-alpha-D-glucose pocket. Zn(2+) is bound by residues Glu-202, His-301, His-319, and His-321. UDP-alpha-D-glucose-binding positions include 334 to 337 (KFMV) and 339 to 340 (YE).

The protein belongs to the galactose-1-phosphate uridylyltransferase type 1 family. Homodimer. Zn(2+) is required as a cofactor.

The catalysed reaction is alpha-D-galactose 1-phosphate + UDP-alpha-D-glucose = alpha-D-glucose 1-phosphate + UDP-alpha-D-galactose. The protein operates within carbohydrate metabolism; galactose metabolism. Its function is as follows. Plays an important role in galactose metabolism. The chain is Galactose-1-phosphate uridylyltransferase (Galt) from Mus musculus (Mouse).